Consider the following 195-residue polypeptide: Large ribosomal subunit protein bL9 (195 aa).

This sequence belongs to the bacterial ribosomal protein bL9 family.

In terms of biological role, binds to the 23S rRNA. The protein is Large ribosomal subunit protein bL9 of Rhodopseudomonas palustris (strain TIE-1).